We begin with the raw amino-acid sequence, 247 residues long: Segregation and condensation protein A (247 aa).

The protein belongs to the ScpA family. In terms of assembly, component of a cohesin-like complex composed of ScpA, ScpB and the Smc homodimer, in which ScpA and ScpB bind to the head domain of Smc. The presence of the three proteins is required for the association of the complex with DNA.

It is found in the cytoplasm. Participates in chromosomal partition during cell division. May act via the formation of a condensin-like complex containing Smc and ScpB that pull DNA away from mid-cell into both cell halves. The sequence is that of Segregation and condensation protein A from Bacillus cereus (strain G9842).